A 1153-amino-acid chain; its full sequence is ATP-dependent helicase/deoxyribonuclease subunit B (1153 aa).

Position 8-15 (Gly8–Ser15) interacts with ATP. Cys786, Cys1104, Cys1107, and Cys1113 together coordinate [4Fe-4S] cluster.

This sequence belongs to the helicase family. AddB/RexB type 1 subfamily. As to quaternary structure, heterodimer of AddA and AddB. Mg(2+) is required as a cofactor. It depends on [4Fe-4S] cluster as a cofactor.

The heterodimer acts as both an ATP-dependent DNA helicase and an ATP-dependent, dual-direction single-stranded exonuclease. Recognizes the chi site generating a DNA molecule suitable for the initiation of homologous recombination. The AddB subunit has 5' -&gt; 3' nuclease activity but not helicase activity. In Clostridium acetobutylicum (strain ATCC 824 / DSM 792 / JCM 1419 / IAM 19013 / LMG 5710 / NBRC 13948 / NRRL B-527 / VKM B-1787 / 2291 / W), this protein is ATP-dependent helicase/deoxyribonuclease subunit B.